A 495-amino-acid polypeptide reads, in one-letter code: Cysteine--tRNA ligase (495 aa).

Residue Cys29 coordinates Zn(2+). Positions 31–41 (PTVYDYGHIGN) match the 'HIGH' region motif. Positions 211, 236, and 240 each coordinate Zn(2+). Residues 268-272 (KMSKS) carry the 'KMSKS' region motif. Residue Lys271 participates in ATP binding.

It belongs to the class-I aminoacyl-tRNA synthetase family. Monomer. It depends on Zn(2+) as a cofactor.

The protein localises to the cytoplasm. It catalyses the reaction tRNA(Cys) + L-cysteine + ATP = L-cysteinyl-tRNA(Cys) + AMP + diphosphate. This Koribacter versatilis (strain Ellin345) protein is Cysteine--tRNA ligase.